Consider the following 427-residue polypeptide: UDP-N-acetylglucosamine 1-carboxyvinyltransferase (427 aa).

22–23 (KN) serves as a coordination point for phosphoenolpyruvate. A UDP-N-acetyl-alpha-D-glucosamine-binding site is contributed by arginine 92. Aspartate 116 serves as the catalytic Proton donor. 2 residues coordinate UDP-N-acetyl-alpha-D-glucosamine: aspartate 312 and methionine 334.

It belongs to the EPSP synthase family. MurA subfamily.

Its subcellular location is the cytoplasm. It catalyses the reaction phosphoenolpyruvate + UDP-N-acetyl-alpha-D-glucosamine = UDP-N-acetyl-3-O-(1-carboxyvinyl)-alpha-D-glucosamine + phosphate. Its pathway is cell wall biogenesis; peptidoglycan biosynthesis. Cell wall formation. Adds enolpyruvyl to UDP-N-acetylglucosamine. This Borrelia garinii subsp. bavariensis (strain ATCC BAA-2496 / DSM 23469 / PBi) (Borreliella bavariensis) protein is UDP-N-acetylglucosamine 1-carboxyvinyltransferase.